The sequence spans 178 residues: 6,7-dimethyl-8-ribityllumazine synthase (178 aa).

5-amino-6-(D-ribitylamino)uracil contacts are provided by residues Y27, 58–60 (SLE), and 82–84 (CVI). Position 87-88 (87-88 (AT)) interacts with (2S)-2-hydroxy-3-oxobutyl phosphate. Catalysis depends on H90, which acts as the Proton donor. N114 contributes to the 5-amino-6-(D-ribitylamino)uracil binding site. Position 128 (R128) interacts with (2S)-2-hydroxy-3-oxobutyl phosphate.

This sequence belongs to the DMRL synthase family.

The enzyme catalyses (2S)-2-hydroxy-3-oxobutyl phosphate + 5-amino-6-(D-ribitylamino)uracil = 6,7-dimethyl-8-(1-D-ribityl)lumazine + phosphate + 2 H2O + H(+). It participates in cofactor biosynthesis; riboflavin biosynthesis; riboflavin from 2-hydroxy-3-oxobutyl phosphate and 5-amino-6-(D-ribitylamino)uracil: step 1/2. Its function is as follows. Catalyzes the formation of 6,7-dimethyl-8-ribityllumazine by condensation of 5-amino-6-(D-ribitylamino)uracil with 3,4-dihydroxy-2-butanone 4-phosphate. This is the penultimate step in the biosynthesis of riboflavin. The chain is 6,7-dimethyl-8-ribityllumazine synthase from Jannaschia sp. (strain CCS1).